A 425-amino-acid polypeptide reads, in one-letter code: Tumor necrosis factor receptor superfamily member 16 (425 aa).

An N-terminal signal peptide occupies residues 1–29; it reads MRRAGAACSAMDRLRLLLLLILGVSSGGA. At 30-253 the chain is on the extracellular side; it reads KETCSTGLYT…VTRGTTDNLI (224 aa). 4 TNFR-Cys repeats span residues 32-65, 67-108, 109-147, and 149-189; these read TCSTGLYTHSGECCKACNLGEGVAQPCGANQTVC, PCLD…DAVC, RCAYGYYQDEETGHCEACSVCEVGSGLVFSCQDKQNTVC, and ECPE…DAEC. 12 disulfides stabilise this stretch: C33-C44, C45-C58, C48-C65, C68-C84, C87-C100, C90-C108, C110-C123, C126-C139, C129-C147, C150-C165, C168-C181, and C171-C189. 2 N-linked (GlcNAc...) asparagine glycosylation sites follow: N61 and N71. The segment at 193–225 is disordered; sequence PGRWIPRSTPPEGSDSTAPSTQEPEVPPEQDLV. A compositionally biased stretch (polar residues) spans 206 to 215; sequence SDSTAPSTQE. The chain crosses the membrane as a helical span at residues 254-274; that stretch reads PVYCSILAAVVVGLVAYIAFK. The Cytoplasmic portion of the chain corresponds to 275–425; it reads RWNSCKQNKQ…CSESTATSPV (151 aa). 2 stretches are compositionally biased toward polar residues: residues 282 to 292 and 306 to 327; these read NKQGANSRPVN and SGISVDSQSLHDQQTHTQTASG. Positions 282 to 332 are disordered; it reads NKQGANSRPVNQTPPPEGEKLHSDSGISVDSQSLHDQQTHTQTASGQALKG. S312 bears the Phosphoserine mark. The segment at 327 to 342 is mediates interaction with KIDINS220; that stretch reads GQALKGDGNLYSSLPL. The 66-residue stretch at 354 to 419 folds into the Death domain; that stretch reads GDTWRHLAGE…DIVESLCSES (66 aa).

As to quaternary structure, homodimer; disulfide-linked. Heterodimer with SORCS2. The extracellular domains of the heterodimer bind NGF. The cytoplasmic region of the heterodimer binds TRIO. NGF binding mediates dissociation of TRIO from the receptor complex. Interacts with RTN4R. Interacts with TRAF2, TRAF4 and TRAF6. Interacts with PTPN13 and RANBP9. Interacts through TRAF6 with SQSTM1 which bridges NGFR to NTRK1. Interacts with BEX1. Interacts with BEX3. Interacts with KIDINS220 and NTRK1. Can form a ternary complex with NTRK1 and KIDINS220 and this complex is affected by the expression levels of KIDINS220. An increase in KIDINS220 expression leads to a decreased association of NGFR and NTRK1. Interacts (via death domain) with RAB31. Interacts with NTRK2; may regulate the ligand specificity of the NTRK2 receptor. Interacts with LINGO1. Interacts with NRADD. Interacts with MAGED1; the interaction antagonizes the association NGFR:NTRK1. Interacts (via death domain) with ARHGDIA and RIPK2. Interacts with BFAR. Subject to intramembrane proteolytic cleavage by the gamma-secretase complex, giving rise to an intracellular fragment that is rapidly degraded via the proteasome. In terms of processing, N- and O-glycosylated. Post-translationally, phosphorylated on serine residues.

Its subcellular location is the cell membrane. The protein localises to the cytoplasm. It is found in the perikaryon. The protein resides in the cell projection. It localises to the growth cone. Its subcellular location is the dendritic spine. Functionally, low affinity receptor which can bind to NGF, BDNF, NTF3, and NTF4. Forms a heterodimeric receptor with SORCS2 that binds the precursor forms of NGF, BDNF and NTF3 with high affinity, and has much lower affinity for mature NGF and BDNF. In response to proNGF binding, the heterodimeric receptor with SORCS2 activates a signaling cascade that leads to decreased Rac activity, reorganization of the actin cytoskeleton and neuronal growth cone collapse. Plays an important role in differentiation and survival of specific neuronal populations during development. Can mediate cell survival as well as cell death of neural cells. Plays a role in the inactivation of RHOA. Plays a role in the regulation of the translocation of GLUT4 to the cell surface in adipocytes and skeletal muscle cells in response to insulin, probably by regulating RAB31 activity, and thereby contributes to the regulation of insulin-dependent glucose uptake. Necessary for the circadian oscillation of the clock genes BMAL1, PER1, PER2 and NR1D1 in the suprachiasmatic nucleus (SCN) of the brain and in liver and of the genes involved in glucose and lipid metabolism in the liver. The polypeptide is Tumor necrosis factor receptor superfamily member 16 (Ngfr) (Rattus norvegicus (Rat)).